We begin with the raw amino-acid sequence, 288 residues long: MNKWLDLILKIHVHPFLWIIAALGLLTGHMKALLCLLLIVLIHELGHAALAVFFSWRIKRVFLLPFGGTVEVEEHGNRPLKEEFAVIIAGPLQHIWLQFAAWMLAEVSVIHQHTFELFTFYNLSILFVNLLPIWPLDGGKLLFLLFSKQLPFQKAHRLNLKTSLCFCLLLGCWVLFVIPLQISAWVLFVFLAVSLFEEYRQRHYIHVRFLLERYYGKNRELEKLLPLTVKAEDKVYHVMAEFKRGCKHPIIIEKSGQKLSQLDENEVLHAYFADKRTNSSMEELLLPY.

The Mother cell cytoplasmic segment spans residues 1–10; it reads MNKWLDLILK. A helical membrane pass occupies residues 11-30; the sequence is IHVHPFLWIIAALGLLTGHM. Residue K31 is a topological domain, forespore intermembrane space. The helical transmembrane segment at 32-56 threads the bilayer; that stretch reads ALLCLLLIVLIHELGHAALAVFFSW. H43 lines the Zn(2+) pocket. E44 is an active-site residue. H47 contributes to the Zn(2+) binding site. Residues 57 to 83 lie on the Mother cell cytoplasmic side of the membrane; that stretch reads RIKRVFLLPFGGTVEVEEHGNRPLKEE. The chain crosses the membrane as a helical span at residues 84 to 105; it reads FAVIIAGPLQHIWLQFAAWMLA. Residues 106-126 lie on the Forespore intermembrane space side of the membrane; sequence EVSVIHQHTFELFTFYNLSIL. The helical transmembrane segment at 127 to 146 threads the bilayer; that stretch reads FVNLLPIWPLDGGKLLFLLF. A Zn(2+)-binding site is contributed by D137. The Mother cell cytoplasmic segment spans residues 147-161; that stretch reads SKQLPFQKAHRLNLK. Residues 162 to 178 form a helical membrane-spanning segment; the sequence is TSLCFCLLLGCWVLFVI. P179 is a topological domain (forespore intermembrane space). Residues 180 to 199 traverse the membrane as a helical segment; sequence LQISAWVLFVFLAVSLFEEY. Residues 200-288 are Mother cell cytoplasmic-facing; it reads RQRHYIHVRF…SSMEELLLPY (89 aa).

This sequence belongs to the peptidase M50B family. Forms a complex with SpoIVFA and BofA localized in the mother-cell membrane surrounding the forespore. Zn(2+) serves as cofactor.

It is found in the forespore outer membrane. In terms of biological role, implicated in the coupling of mother cell to forespore gene expression. Required for spore formation. Processes the pro-sigma K factor. This Bacillus subtilis (strain 168) protein is Stage IV sporulation protein FB (spoIVFB).